We begin with the raw amino-acid sequence, 303 residues long: MSKRPDWIKVKAPNSSEYYNTKDLIKNLKLNTVCEEAACPNIGECWSKKHATVMILGSVCTRACRFCNVKTGRPDLLDPHEPQRLAEAVQKLGLKHVVITSVDRDDLEDGGATHFAECISEIRKSSPNTTIEILTPDFLRKDGAAEIIANAKPDVFNHNVETVPSLYNTIRPGARYYNSLSLLHNIKKLSPEVFTKSGMMVGLGEEISEVVQVMDDLREAKVDFLTIGQYLQPTKNHAEVAKYVTPEEFKYLERVARTKGFLMVSASPLTRSSYHADEDFEKLKENYRHRHCEERRSIDVAIS.

Residues cysteine 34, cysteine 39, cysteine 45, cysteine 60, cysteine 64, cysteine 67, and serine 273 each contribute to the [4Fe-4S] cluster site. Residues 46–262 (WSKKHATVMI…ERVARTKGFL (217 aa)) enclose the Radical SAM core domain.

This sequence belongs to the radical SAM superfamily. Lipoyl synthase family. [4Fe-4S] cluster is required as a cofactor.

Its subcellular location is the cytoplasm. The enzyme catalyses [[Fe-S] cluster scaffold protein carrying a second [4Fe-4S](2+) cluster] + N(6)-octanoyl-L-lysyl-[protein] + 2 oxidized [2Fe-2S]-[ferredoxin] + 2 S-adenosyl-L-methionine + 4 H(+) = [[Fe-S] cluster scaffold protein] + N(6)-[(R)-dihydrolipoyl]-L-lysyl-[protein] + 4 Fe(3+) + 2 hydrogen sulfide + 2 5'-deoxyadenosine + 2 L-methionine + 2 reduced [2Fe-2S]-[ferredoxin]. The protein operates within protein modification; protein lipoylation via endogenous pathway; protein N(6)-(lipoyl)lysine from octanoyl-[acyl-carrier-protein]: step 2/2. Its function is as follows. Catalyzes the radical-mediated insertion of two sulfur atoms into the C-6 and C-8 positions of the octanoyl moiety bound to the lipoyl domains of lipoate-dependent enzymes, thereby converting the octanoylated domains into lipoylated derivatives. This is Lipoyl synthase from Rickettsia bellii (strain OSU 85-389).